Here is a 146-residue protein sequence, read N- to C-terminus: Snaclec mucetin subunit beta (146 aa).

Residues 1–23 (MGRFIFVSFGLLVVFISLSGTEA) form the signal peptide. Intrachain disulfides connect cysteine 27–cysteine 38, cysteine 55–cysteine 144, and cysteine 121–cysteine 136. The 112-residue stretch at 34–145 (YDEHCYQVFQ…CSSKRYVVCK (112 aa)) folds into the C-type lectin domain.

This sequence belongs to the snaclec family. In terms of assembly, dimer and tetramer of heterodimers of alpha and beta subunits ((alphabeta)(2) and (alphabeta)(4)); disulfide-linked. These two multimeric forms are found. Post-translationally, the complex is glycosylated. Expressed by the venom gland.

The protein localises to the secreted. Its function is as follows. Potent platelet activator that acts via GPIb (GP1BA/GP1BB). After activation by the toxin, the receptor is redistributed on platelet surface thanks to cytoskeletal translocation. The indirect activation of integrin alpha-IIb/beta-3 (ITGA2B/ITGB3) also induced by the toxin is downstream the cytoskeletal translocation of GPIb. The polypeptide is Snaclec mucetin subunit beta (Protobothrops mucrosquamatus (Taiwan habu)).